The sequence spans 223 residues: Imidazoleglycerol-phosphate dehydratase (223 aa).

This sequence belongs to the imidazoleglycerol-phosphate dehydratase family.

The catalysed reaction is D-erythro-1-(imidazol-4-yl)glycerol 3-phosphate = 3-(imidazol-4-yl)-2-oxopropyl phosphate + H2O. It participates in amino-acid biosynthesis; L-histidine biosynthesis; L-histidine from 5-phospho-alpha-D-ribose 1-diphosphate: step 6/9. The sequence is that of Imidazoleglycerol-phosphate dehydratase (HIS3) from Candida albicans (Yeast).